Here is a 176-residue protein sequence, read N- to C-terminus: Endoribonuclease YbeY (176 aa).

H117, H121, and H127 together coordinate Zn(2+).

It belongs to the endoribonuclease YbeY family. Zn(2+) serves as cofactor.

Its subcellular location is the cytoplasm. Functionally, single strand-specific metallo-endoribonuclease involved in late-stage 70S ribosome quality control and in maturation of the 3' terminus of the 16S rRNA. This Methylocella silvestris (strain DSM 15510 / CIP 108128 / LMG 27833 / NCIMB 13906 / BL2) protein is Endoribonuclease YbeY.